A 191-amino-acid polypeptide reads, in one-letter code: Sec-independent protein translocase protein TatB (191 aa).

Residues 1–21 (MFDIGFSELFLILVIGLLVLG) form a helical membrane-spanning segment. The segment covering 119–138 (ESTSQTLTEQLTPSEQVTEA) has biased composition (polar residues). Disordered regions lie at residues 119-139 (ESTSQTLTEQLTPSEQVTEAT) and 168-191 (DDDDEPVFASKVKPQTEEIQDKKA). The segment covering 181–191 (PQTEEIQDKKA) has biased composition (basic and acidic residues).

The protein belongs to the TatB family. The Tat system comprises two distinct complexes: a TatABC complex, containing multiple copies of TatA, TatB and TatC subunits, and a separate TatA complex, containing only TatA subunits. Substrates initially bind to the TatABC complex, which probably triggers association of the separate TatA complex to form the active translocon.

It localises to the cell inner membrane. Its function is as follows. Part of the twin-arginine translocation (Tat) system that transports large folded proteins containing a characteristic twin-arginine motif in their signal peptide across membranes. Together with TatC, TatB is part of a receptor directly interacting with Tat signal peptides. TatB may form an oligomeric binding site that transiently accommodates folded Tat precursor proteins before their translocation. The sequence is that of Sec-independent protein translocase protein TatB from Pasteurella multocida (strain Pm70).